The following is a 334-amino-acid chain: MQWPTLWAFSGLLCLCPSQALGQERGACPDVKVVGLGAQDKVVVIQSCPGFPGPPGPKGEPGSPAGRGERGFQGSPGKMGPAGSKGEPGTMGPPGVKGEKGDTGAAPSLGEKELGDTLCQRGPRSCKDLLTRGIFLTGWYTIHLPDCRPLTVLCDMDVDGGGWTVFQRRVDGSIDFFRDWDSYKRGFGNLGTEFWLGNDYLHLLTANGNQELRVDLQDFQGKGSYAKYSSFQVSEEQEKYKLTLGQFLEGTAGDSLTKHNNMSFTTHDQDNDANSMNCAALFHGAWWYHNCHQSNLNGRYLSGSHESYADGINWGTGQGHHYSYKVAEMKIRAS.

Residues 1–17 (MQWPTLWAFSGLLCLCP) form the signal peptide. The segment at 47–117 (SCPGFPGPPG…SLGEKELGDT (71 aa)) is disordered. In terms of domain architecture, Collagen-like spans 50-88 (GFPGPPGPKGEPGSPAGRGERGFQGSPGKMGPAGSKGEP). The Fibrinogen C-terminal domain maps to 117–334 (TLCQRGPRSC…KVAEMKIRAS (218 aa)). 2 disulfide bridges follow: C119/C147 and C126/C154. The interval 123 to 162 (PRSCKDLLTRGIFLTGWYTIHLPDCRPLTVLCDMDVDGGG) is a domain; contributes to trimerization. The segment at 163–251 (WTVFQRRVDG…LTLGQFLEGT (89 aa)) is b domain; contributes to trimerization. An N-linked (GlcNAc...) asparagine glycan is attached at N261. D270 and D272 together coordinate Ca(2+). A disulfide bridge connects residues C278 and C291. 290 to 292 (NCH) contacts a carbohydrate. The segment at 325 to 334 (KVAEMKIRAS) is p domain.

It belongs to the ficolin lectin family. Homotrimer. Interacts with elastin/ELN. Interacts (via Fibrinogen C-terminal domain) with FFAR2. Interacts with CRP; may regulate monocyte activation by FCN1. As to expression, highly expressed in liver and spleen.

The protein resides in the secreted. It localises to the cell membrane. Functionally, extracellular lectin functioning as a pattern-recognition receptor in innate immunity. Binds the sugar moieties of pathogen-associated molecular patterns (PAMPs) displayed on microbes and activates the lectin pathway of the complement system. May also activate monocytes through a G protein-coupled receptor, FFAR2, inducing the secretion of interleukin-8/IL-8. Binds preferentially to 9-O-acetylated 2-6-linked sialic acid derivatives and to various glycans containing sialic acid engaged in a 2-3 linkage. The sequence is that of Ficolin-1 (Fcn1) from Mus musculus (Mouse).